The sequence spans 176 residues: Translation initiation factor IF-3 (176 aa).

Belongs to the IF-3 family. In terms of assembly, monomer.

It localises to the cytoplasm. IF-3 binds to the 30S ribosomal subunit and shifts the equilibrium between 70S ribosomes and their 50S and 30S subunits in favor of the free subunits, thus enhancing the availability of 30S subunits on which protein synthesis initiation begins. This Streptococcus equi subsp. zooepidemicus (strain H70) protein is Translation initiation factor IF-3.